A 462-amino-acid chain; its full sequence is Fumarate hydratase class II (462 aa).

Substrate contacts are provided by residues 97 to 99, 127 to 130, 137 to 139, and T185; these read SGT, HPND, and SSN. The active-site Proton donor/acceptor is the H186. The active site involves S316. Substrate-binding positions include S317 and 322-324; that span reads KVN.

Belongs to the class-II fumarase/aspartase family. Fumarase subfamily. Homotetramer.

The protein resides in the cytoplasm. The catalysed reaction is (S)-malate = fumarate + H2O. Its pathway is carbohydrate metabolism; tricarboxylic acid cycle; (S)-malate from fumarate: step 1/1. Its function is as follows. Involved in the TCA cycle. Catalyzes the stereospecific interconversion of fumarate to L-malate. This is Fumarate hydratase class II from Bacillus subtilis (strain 168).